Reading from the N-terminus, the 78-residue chain is U-scoloptoxin(04)-Er1a (78 aa).

Residues 1–24 (MTRHLIFAAVLLVCLFVCWNAIGA) form the signal peptide. The propeptide occupies 25–28 (QDAR).

The protein belongs to the scoloptoxin-04 family. In terms of processing, contains 2 disulfide bonds. In terms of tissue distribution, expressed by the venom gland.

Its subcellular location is the secreted. This is U-scoloptoxin(04)-Er1a from Ethmostigmus rubripes (Giant centipede).